The primary structure comprises 607 residues: UvrABC system protein C (607 aa).

The 79-residue stretch at 16–94 (GRPGVYRMFD…IKEWRPPYNI (79 aa)) folds into the GIY-YIG domain. Residues 203 to 238 (NALSDELNASMEKAAMALDFERAAELRDQVALLRRV) enclose the UVR domain.

It belongs to the UvrC family. As to quaternary structure, interacts with UvrB in an incision complex.

Its subcellular location is the cytoplasm. Functionally, the UvrABC repair system catalyzes the recognition and processing of DNA lesions. UvrC both incises the 5' and 3' sides of the lesion. The N-terminal half is responsible for the 3' incision and the C-terminal half is responsible for the 5' incision. The protein is UvrABC system protein C of Pseudomonas syringae pv. tomato (strain ATCC BAA-871 / DC3000).